The sequence spans 420 residues: Sulfate adenylyltransferase (420 aa).

The protein belongs to the sulfate adenylyltransferase family.

The enzyme catalyses sulfate + ATP + H(+) = adenosine 5'-phosphosulfate + diphosphate. The protein operates within sulfur metabolism; hydrogen sulfide biosynthesis; sulfite from sulfate: step 1/3. In Desulforudis audaxviator (strain MP104C), this protein is Sulfate adenylyltransferase.